The chain runs to 308 residues: Urease subunit beta (308 aa).

A Urease domain is found at 131-308 (GGIDTHIHFI…STNPTIPFTK (178 aa)). Ni(2+)-binding residues include histidine 136, histidine 138, lysine 219, histidine 248, and histidine 274. Lysine 219 bears the N6-carboxylysine mark.

Belongs to the metallo-dependent hydrolases superfamily. Urease alpha subunit family. As to quaternary structure, heterohexamer of 3 UreA (alpha) and 3 UreB (beta) subunits. Ni cation serves as cofactor. Post-translationally, carboxylation allows a single lysine to coordinate two nickel ions.

The protein localises to the cytoplasm. It carries out the reaction urea + 2 H2O + H(+) = hydrogencarbonate + 2 NH4(+). It participates in nitrogen metabolism; urea degradation; CO(2) and NH(3) from urea (urease route): step 1/1. This Helicobacter mustelae protein is Urease subunit beta (ureB).